A 1258-amino-acid chain; its full sequence is Serine/threonine-protein kinase Nek1 (1258 aa).

In terms of domain architecture, Protein kinase spans 4 to 258; sequence YVRLQKIGEG…VNSILEKGFI (255 aa). ATP is bound by residues 10 to 18 and lysine 33; that span reads IGEGSFGKA. The active-site Proton acceptor is aspartate 128. Threonine 156 carries the phosphothreonine modification. The residue at position 162 (threonine 162) is a Phosphothreonine; by autocatalysis. The segment at 330 to 360 is disordered; that stretch reads HEKKPLQKHKQAHQTPEKRVNTGEERRKISE. Positions 344–360 are enriched in basic and acidic residues; sequence TPEKRVNTGEERRKISE. Residues serine 414, serine 418, serine 428, and serine 438 each carry the phosphoserine modification. 3 disordered regions span residues 578–600, 648–669, and 685–704; these read KLRGEKKEANHSEGQEGSEEADM, KSSDVSPPLGQHETGGSPSKQQ, and VDSSLTDTRETSEEMQKTNN. A compositionally biased stretch (basic and acidic residues) spans 579–591; it reads LRGEKKEANHSEG. The residue at position 653 (serine 653) is a Phosphoserine. Threonine 661 carries the post-translational modification Phosphothreonine. Serine 664 is subject to Phosphoserine. The span at 691–700 shows a compositional bias: basic and acidic residues; it reads DTRETSEEMQ. Serine 798, serine 834, serine 868, serine 881, serine 1052, and serine 1126 each carry phosphoserine. Positions 1118–1171 are disordered; it reads REQPGEEYSEEEESVLKNSDVEPTANGTDVADEDDNPSSESALNEEWHSDNSDG.

Belongs to the protein kinase superfamily. NEK Ser/Thr protein kinase family. NIMA subfamily. In terms of assembly, binds to CBY2. Found in a complex with CFAP410, NEK1 and SPATA7. Interacts with CFAP410. Interacts (via Ser-1052 phosphorylated form) with 14-3-3 proteins. The cofactor is Mg(2+). In terms of tissue distribution, high fetal expression in the brain and kidney.

It localises to the nucleus. It is found in the cytoplasm. Its subcellular location is the cytoskeleton. The protein resides in the microtubule organizing center. The protein localises to the centrosome. The catalysed reaction is L-seryl-[protein] + ATP = O-phospho-L-seryl-[protein] + ADP + H(+). It carries out the reaction L-threonyl-[protein] + ATP = O-phospho-L-threonyl-[protein] + ADP + H(+). In terms of biological role, phosphorylates serines and threonines, but also appears to possess tyrosine kinase activity. Involved in DNA damage checkpoint control and for proper DNA damage repair. In response to injury that includes DNA damage, NEK1 phosphorylates VDAC1 to limit mitochondrial cell death. May be implicated in the control of meiosis. Involved in cilium assembly. This chain is Serine/threonine-protein kinase Nek1 (NEK1), found in Homo sapiens (Human).